We begin with the raw amino-acid sequence, 368 residues long: Solute carrier family 35 member G1 (368 aa).

Transmembrane regions (helical) follow at residues 72 to 92 (GLGL…SLFV), 100 to 120 (AVEI…PCLI), 134 to 154 (LFLF…YYAF), 161 to 181 (DATV…WIFL), 190 to 210 (AFFT…PFIF), 225 to 245 (IKGT…LVIL), 256 to 276 (LSIW…LFVI), 289 to 309 (LFLI…TKAV), 316 to 336 (LVAI…IAFF), and 340 to 360 (PTWW…GATI). EamA domains lie at 83–205 (FLFS…LIVR) and 236–360 (VLAA…GATI).

It belongs to the TMEM20 family. In terms of assembly, interacts with STIM1; stimulated by depletion of intracellular calcium. Interacts with ORAI1. Interacts with the plasma membrane calcium-transporting ATPases ATP2B1 and ATP2B4. Interacts with ATP1A1, ATP2A2, KPNB1 and XPO1.

The protein localises to the cell membrane. The protein resides in the endoplasmic reticulum membrane. Functionally, may play a role in intracellular calcium sensing and homeostasis. May act as a negative regulator of plasma membrane calcium-transporting ATPases preventing calcium efflux from the cell. This chain is Solute carrier family 35 member G1 (Slc35g1), found in Mus musculus (Mouse).